The primary structure comprises 1228 residues: Minor fimbrium subunit Mfa5 (1228 aa).

The N-terminal stretch at 1-25 (MMKRYTIILAVFLLFCTVFTFQIKA) is a signal peptide. A VWFA domain is found at 144 to 267 (DVVMVIDQSS…QYPVKNVTTA (124 aa)).

In terms of assembly, minor fimbriae are composed of a structural subunit, most often Mfa1, and the accessory subunits Mfa3, Mfa4 and Mfa5. Fimbrium assembly occurs by linear, head-to-tail oligomerization of fimbrial subunits. This is mediated via insertion of a C-terminal beta-strand from one subunit into a groove in the N-terminal domain of the following subunit.

Its subcellular location is the fimbrium. Functionally, accessory subunit of the minor fimbriae. These filamentous pili are attached to the cell surface; they mediate biofilm formation, adhesion onto host cells and onto other bacteria that are part of the oral microbiome. They play an important role in invasion of periodontal tissues and are recognized as major virulence factors. Fimbrium subunits from different strains have highly divergent sequences, and this correlates with pathogenicity. The sequence is that of Minor fimbrium subunit Mfa5 from Porphyromonas gingivalis (strain ATCC 33277 / DSM 20709 / CIP 103683 / JCM 12257 / NCTC 11834 / 2561).